The following is a 563-amino-acid chain: Phosphomethylpyrimidine synthase (563 aa).

The interval 95-115 (PGKNPSPMNNRTPVRAKQGKS) is disordered. Residues N200, M229, Y258, H294, 314–316 (SRG), 355–358 (DALR), and E394 contribute to the substrate site. Residue H398 coordinates Zn(2+). Position 421 (Y421) interacts with substrate. H462 lines the Zn(2+) pocket. C544, C547, and C552 together coordinate [4Fe-4S] cluster.

This sequence belongs to the ThiC family. [4Fe-4S] cluster serves as cofactor.

It catalyses the reaction 5-amino-1-(5-phospho-beta-D-ribosyl)imidazole + S-adenosyl-L-methionine = 4-amino-2-methyl-5-(phosphooxymethyl)pyrimidine + CO + 5'-deoxyadenosine + formate + L-methionine + 3 H(+). The protein operates within cofactor biosynthesis; thiamine diphosphate biosynthesis. Catalyzes the synthesis of the hydroxymethylpyrimidine phosphate (HMP-P) moiety of thiamine from aminoimidazole ribotide (AIR) in a radical S-adenosyl-L-methionine (SAM)-dependent reaction. The chain is Phosphomethylpyrimidine synthase from Chlorobium phaeobacteroides (strain BS1).